The primary structure comprises 109 residues: Major allergen I polypeptide chain 2 (109 aa).

An N-terminal signal peptide occupies residues 1-17 (MRGALLVLALLVTQALG). N-linked (GlcNAc...) asparagine glycosylation is present at N50.

This sequence belongs to the secretoglobin family. As to quaternary structure, heterotetramer composed of two non-covalently linked disulfide-linked heterodimer of chains 1 and 2. As to expression, the long form is preferentially expressed in the salivary gland, while the short form is preferentially expressed in the skin.

The protein resides in the secreted. The chain is Major allergen I polypeptide chain 2 (CH2) from Felis catus (Cat).